The primary structure comprises 648 residues: TBC1 domain family member 17 (648 aa).

Residues 218–309 are required for interaction with OPTN; sequence DPYSTTFSSF…PELKNRIFSG (92 aa). The interval 240-259 is disordered; the sequence is PQPEGAASDLPPPPDDEPEP. The Rab-GAP TBC domain maps to 310–520; that stretch reads GLSPSLRREA…RLWEVLWTGL (211 aa). The disordered stretch occupies residues 594-648; that stretch reads LAPPAEPHSPSPTASPLPLSPTRAPPTPPPSTDTAPQPDSSLEILPEEEDEGADS. Over residues 597-624 the composition is skewed to pro residues; that stretch reads PAEPHSPSPTASPLPLSPTRAPPTPPPS. A phosphoserine mark is found at S602 and S604. Position 606 is a phosphothreonine (T606). S608 carries the phosphoserine modification. T615 carries the phosphothreonine modification. Positions 625–634 are enriched in low complexity; it reads TDTAPQPDSS. Residues 638 to 648 show a composition bias toward acidic residues; it reads LPEEEDEGADS.

In terms of assembly, interacts with OPTN; this interaction mediates TBC1D17 transient association with Rab8.

The protein localises to the cytoplasmic vesicle. The protein resides in the autophagosome. Its subcellular location is the cytoplasm. It localises to the recycling endosome. Probable RAB GTPase-activating protein that inhibits RAB8A/B function. Reduces Rab8 recruitment to tubules emanating from the endocytic recycling compartment (ERC) and inhibits Rab8-mediated endocytic trafficking, such as that of transferrin receptor (TfR). Involved in regulation of autophagy. The chain is TBC1 domain family member 17 from Homo sapiens (Human).